A 238-amino-acid chain; its full sequence is DNA repair protein RecO (238 aa).

Belongs to the RecO family.

Involved in DNA repair and RecF pathway recombination. The sequence is that of DNA repair protein RecO from Flavobacterium psychrophilum (strain ATCC 49511 / DSM 21280 / CIP 103535 / JIP02/86).